The chain runs to 145 residues: Protein SprT-like (145 aa).

A SprT-like domain is found at 4 to 141 (TDYVKEVSRQ…CGNCHGKLRH (138 aa)). Position 64 (histidine 64) interacts with Zn(2+). Glutamate 65 is an active-site residue. Histidine 68 provides a ligand contact to Zn(2+).

It belongs to the SprT family. It depends on Zn(2+) as a cofactor.

It localises to the cytoplasm. In Streptococcus mutans serotype c (strain ATCC 700610 / UA159), this protein is Protein SprT-like.